Consider the following 230-residue polypeptide: RING finger protein 141 (230 aa).

Residue G2 is the site of N-myristoyl glycine attachment. An RING-type zinc finger spans residues 155–192; sequence CCICMDGRADLILPCAHSFCQKCIDKWSDRHRNCPICR.

As to expression, isoform 1 is testis-specific. Isoform 2 is expressed in heart, brain, skeletal muscle, kidney, pancreas, lung, liver and testis. Isoform 3 is expressed in heart, liver, and kidney.

The protein resides in the membrane. Its function is as follows. May be involved in spermatogenesis. This Mus musculus (Mouse) protein is RING finger protein 141 (Rnf141).